A 283-amino-acid chain; its full sequence is MAGAGLLEIKRRIKSIKNTRKITKAMGLVATSKLRKARQKLTENNQYFSSLDEIARELIGSLNSNNNPLLKPNDNPKKLIILLASDSGLCGGFNGNTAAFVRDNYENNLENIEAVVVGKKGIHYVKKNKISTLAEYVDLGDTPNVGDASTIVNKAVKEFTDGNFGEVSLVYTKFFSPVKQEVVEEKLLPLDLTGEKGKVSFLIEPDEDEIIDSLVSSYLKGKFMNAMFNSKASEQSARMQAMDGATKNADDLLNSLDAKYNRIRQSIITQEISEIVGGAEAQK.

The protein belongs to the ATPase gamma chain family. F-type ATPases have 2 components, CF(1) - the catalytic core - and CF(0) - the membrane proton channel. CF(1) has five subunits: alpha(3), beta(3), gamma(1), delta(1), epsilon(1). CF(0) has three main subunits: a, b and c.

Its subcellular location is the cell membrane. Functionally, produces ATP from ADP in the presence of a proton gradient across the membrane. The gamma chain is believed to be important in regulating ATPase activity and the flow of protons through the CF(0) complex. This is ATP synthase gamma chain from Clostridium perfringens (strain ATCC 13124 / DSM 756 / JCM 1290 / NCIMB 6125 / NCTC 8237 / Type A).